The sequence spans 109 residues: Iron-sulfur cluster assembly protein CyaY (109 aa).

Belongs to the frataxin family.

Involved in iron-sulfur (Fe-S) cluster assembly. May act as a regulator of Fe-S biogenesis. The chain is Iron-sulfur cluster assembly protein CyaY from Albidiferax ferrireducens (strain ATCC BAA-621 / DSM 15236 / T118) (Rhodoferax ferrireducens).